The following is a 447-amino-acid chain: Argininosuccinate lyase (447 aa).

The protein belongs to the lyase 1 family. Argininosuccinate lyase subfamily.

The protein resides in the cytoplasm. It catalyses the reaction 2-(N(omega)-L-arginino)succinate = fumarate + L-arginine. The protein operates within amino-acid biosynthesis; L-arginine biosynthesis; L-arginine from L-ornithine and carbamoyl phosphate: step 3/3. The polypeptide is Argininosuccinate lyase (Bacteroides fragilis (strain ATCC 25285 / DSM 2151 / CCUG 4856 / JCM 11019 / LMG 10263 / NCTC 9343 / Onslow / VPI 2553 / EN-2)).